The sequence spans 340 residues: UDP-3-O-acylglucosamine N-acyltransferase (340 aa).

The Proton acceptor role is filled by His-238.

It belongs to the transferase hexapeptide repeat family. LpxD subfamily. Homotrimer.

It carries out the reaction a UDP-3-O-[(3R)-3-hydroxyacyl]-alpha-D-glucosamine + a (3R)-hydroxyacyl-[ACP] = a UDP-2-N,3-O-bis[(3R)-3-hydroxyacyl]-alpha-D-glucosamine + holo-[ACP] + H(+). It participates in bacterial outer membrane biogenesis; LPS lipid A biosynthesis. In terms of biological role, catalyzes the N-acylation of UDP-3-O-acylglucosamine using 3-hydroxyacyl-ACP as the acyl donor. Is involved in the biosynthesis of lipid A, a phosphorylated glycolipid that anchors the lipopolysaccharide to the outer membrane of the cell. The sequence is that of UDP-3-O-acylglucosamine N-acyltransferase from Shewanella frigidimarina (strain NCIMB 400).